Consider the following 261-residue polypeptide: Imidazole glycerol phosphate synthase subunit HisF (261 aa).

Active-site residues include Asp12 and Asp131.

This sequence belongs to the HisA/HisF family. As to quaternary structure, heterodimer of HisH and HisF.

Its subcellular location is the cytoplasm. It catalyses the reaction 5-[(5-phospho-1-deoxy-D-ribulos-1-ylimino)methylamino]-1-(5-phospho-beta-D-ribosyl)imidazole-4-carboxamide + L-glutamine = D-erythro-1-(imidazol-4-yl)glycerol 3-phosphate + 5-amino-1-(5-phospho-beta-D-ribosyl)imidazole-4-carboxamide + L-glutamate + H(+). It participates in amino-acid biosynthesis; L-histidine biosynthesis; L-histidine from 5-phospho-alpha-D-ribose 1-diphosphate: step 5/9. Its function is as follows. IGPS catalyzes the conversion of PRFAR and glutamine to IGP, AICAR and glutamate. The HisF subunit catalyzes the cyclization activity that produces IGP and AICAR from PRFAR using the ammonia provided by the HisH subunit. This Brucella melitensis biotype 2 (strain ATCC 23457) protein is Imidazole glycerol phosphate synthase subunit HisF.